The sequence spans 906 residues: Cadherin-2 (906 aa).

The signal sequence occupies residues 1 to 25; the sequence is MCRIVGAPRTLLPLLAALLQASVEA. Residues 26–159 constitute a propeptide that is removed on maturation; it reads SGGIALCKTG…HNGHLQRQKR (134 aa). Phosphoserine occurs at positions 96 and 135. Cadherin domains are found at residues 160 to 267, 268 to 382, 383 to 497, 498 to 603, and 604 to 714; these read DWVI…RPEF, LHQV…PPEF, TAMS…NPYF, APNP…DNAP, and QVVP…DVDR. Topologically, residues 160–724 are extracellular; sequence DWVIPPINLP…IVGAGLGTGA (565 aa). Glu-170 contacts Ca(2+). A glycan (N-linked (GlcNAc...) asparagine) is linked at Asn-190. 7 residues coordinate Ca(2+): Asp-226, Glu-228, Asp-259, Met-260, Asn-261, Asp-262, and Asn-263. Asn-273 is a glycosylation site (N-linked (GlcNAc...) asparagine). Ca(2+) contacts are provided by Asp-293, Asp-295, and Asn-301. A glycan (N-linked (GlcNAc...) asparagine) is linked at Asn-325. Asp-353 serves as a coordination point for Ca(2+). N-linked (GlcNAc...) asparagine glycans are attached at residues Asn-402, Asn-572, Asn-622, Asn-651, and Asn-692. A helical transmembrane segment spans residues 725-745; that stretch reads IIAILLCIIILLILVLMFVVW. Topologically, residues 746–906 are cytoplasmic; that stretch reads MKRRDKERQA…LADMYGGGDD (161 aa). A compositionally biased stretch (low complexity) spans 863 to 880; the sequence is SGSTAGSLSSLNSSSSGG. The disordered stretch occupies residues 863-884; that stretch reads SGSTAGSLSSLNSSSSGGEQDY.

As to quaternary structure, homodimer (via extracellular region). Can also form heterodimers with other cadherins (via extracellular region). Dimerization occurs in trans, i.e. with a cadherin chain from another cell. Interacts with CDCP1. Interacts with PCDH8; this complex may also include TAOK2. The interaction with PCDH8 may lead to internalization through TAOK2/p38 MAPK pathway. Identified in a complex containing FGFR4, NCAM1, CDH2, PLCG1, FRS2, SRC, SHC1, GAP43 and CTTN. May interact with OBSCN (via protein kinase domain 2). Interacts with FBXO45. In terms of processing, cleaved by MMP24. Ectodomain cleavage leads to the generation of a soluble 90 kDa N-terminal soluble fragment and a 45 kDa membrane-bound C-terminal fragment 1 (CTF1), which is further cleaved by gamma-secretase into a 35 kDa. Cleavage in neural stem cells by MMP24 affects CDH2-mediated anchorage of neural stem cells to ependymocytes in the adult subependymal zone, leading to modulate neural stem cell quiescence. Post-translationally, may be phosphorylated by OBSCN.

It is found in the cell membrane. Its subcellular location is the sarcolemma. It localises to the cell junction. The protein resides in the cell surface. The protein localises to the desmosome. It is found in the adherens junction. Functionally, calcium-dependent cell adhesion protein; preferentially mediates homotypic cell-cell adhesion by dimerization with a CDH2 chain from another cell. Cadherins may thus contribute to the sorting of heterogeneous cell types. Acts as a regulator of neural stem cells quiescence by mediating anchorage of neural stem cells to ependymocytes in the adult subependymal zone: upon cleavage by MMP24, CDH2-mediated anchorage is affected, leading to modulate neural stem cell quiescence. Plays a role in cell-to-cell junction formation between pancreatic beta cells and neural crest stem (NCS) cells, promoting the formation of processes by NCS cells. CDH2 may be involved in neuronal recognition mechanism. In hippocampal neurons, may regulate dendritic spine density. The protein is Cadherin-2 (CDH2) of Rhinolophus ferrumequinum (Greater horseshoe bat).